Here is a 1407-residue protein sequence, read N- to C-terminus: DNA-directed RNA polymerase subunit beta' (1407 aa).

Residues C70, C72, C85, and C88 each coordinate Zn(2+). Mg(2+) contacts are provided by D460, D462, and D464. Zn(2+) contacts are provided by C814, C888, C895, and C898.

This sequence belongs to the RNA polymerase beta' chain family. As to quaternary structure, the RNAP catalytic core consists of 2 alpha, 1 beta, 1 beta' and 1 omega subunit. When a sigma factor is associated with the core the holoenzyme is formed, which can initiate transcription. It depends on Mg(2+) as a cofactor. Zn(2+) is required as a cofactor.

It carries out the reaction RNA(n) + a ribonucleoside 5'-triphosphate = RNA(n+1) + diphosphate. Its function is as follows. DNA-dependent RNA polymerase catalyzes the transcription of DNA into RNA using the four ribonucleoside triphosphates as substrates. The chain is DNA-directed RNA polymerase subunit beta' from Citrobacter koseri (strain ATCC BAA-895 / CDC 4225-83 / SGSC4696).